Consider the following 445-residue polypeptide: UPF0210 protein SPH_0352 (445 aa).

Belongs to the UPF0210 family. As to quaternary structure, homodimer.

This is UPF0210 protein SPH_0352 from Streptococcus pneumoniae (strain Hungary19A-6).